The sequence spans 467 residues: Inactive pancreatic lipase-related protein 1 (467 aa).

Residues 1-17 form the signal peptide; that stretch reads MLIFWTITLFLLGAAKG. 2 disulfides stabilise this stretch: Cys21/Cys27 and Cys109/Cys120. The Nucleophile role is filled by Ser171. Catalysis depends on Asp194, which acts as the Charge relay system. Glu205, Arg208, Asp210, and Asp213 together coordinate Ca(2+). An intrachain disulfide couples Cys255 to Cys279. Catalysis depends on His281, which acts as the Charge relay system. 3 disulfide bridges follow: Cys303–Cys314, Cys317–Cys322, and Cys451–Cys467. The region spanning 356 to 467 is the PLAT domain; sequence WRYGVSITLS…EDTLLTLTPC (112 aa).

This sequence belongs to the AB hydrolase superfamily. Lipase family. In terms of tissue distribution, pancreas.

The protein localises to the secreted. In terms of biological role, may function as inhibitor of dietary triglyceride digestion. Lacks detectable lipase activity towards triglycerides, diglycerides, phosphatidylcholine, galactolipids or cholesterol esters (in vitro). The sequence is that of Inactive pancreatic lipase-related protein 1 (PNLIPRP1) from Homo sapiens (Human).